We begin with the raw amino-acid sequence, 651 residues long: Nucleolin (651 aa).

Over residues 1–11 the composition is skewed to low complexity; sequence MVKLAKGAKTQ. Positions 1–230 are disordered; sequence MVKLAKGAKT…AKKTKTDTAS (230 aa). Residues 26-45 show a composition bias toward acidic residues; it reads EDSEEEEDMEEDDSSDEEVE. Over residues 54–79 the composition is skewed to low complexity; that stretch reads KKTATPAKATPGKAATPGKKGATPAK. The segment covering 89–101 has biased composition (acidic residues); it reads SEEEEDDSDEEAE. The span at 106-116 shows a compositional bias: basic residues; sequence IKNKPVAKKAV. Composition is skewed to acidic residues over residues 122–134, 155–168, and 183–204; these read SEED…ESEE, SEEE…DEPM, and AEED…EEEQ. Ser155 bears the Phosphoserine mark. Over residues 219-228 the composition is skewed to basic and acidic residues; sequence PEAKKTKTDT. RRM domains follow at residues 233-309, 325-399, 415-488, and 503-578; these read LSIF…KAMA, RTLF…FTGE, KVLV…FSQG, and KTLF…FAKP. The disordered stretch occupies residues 574-651; sequence DFAKPKGDSQ…GQGKKMRFDD (78 aa). The span at 585-644 shows a compositional bias: gly residues; sequence GGRGGFGRGGGFRGGRGGRGGGGGRGFGGRGGGRGRGGFGGRGGGGFRGGQGGGFRGGQG.

It is found in the nucleus. The protein resides in the nucleolus. In terms of biological role, nucleolin is the major nucleolar protein of growing eukaryotic cells. It is found associated with intranucleolar chromatin and pre-ribosomal particles. It induces chromatin decondensation by binding to histone H1. It is thought to play a role in pre-rRNA transcription and ribosome assembly. The chain is Nucleolin (ncl) from Xenopus laevis (African clawed frog).